The primary structure comprises 687 residues: Glycine--tRNA ligase beta subunit (687 aa).

This sequence belongs to the class-II aminoacyl-tRNA synthetase family. Tetramer of two alpha and two beta subunits.

Its subcellular location is the cytoplasm. It carries out the reaction tRNA(Gly) + glycine + ATP = glycyl-tRNA(Gly) + AMP + diphosphate. The sequence is that of Glycine--tRNA ligase beta subunit from Geotalea daltonii (strain DSM 22248 / JCM 15807 / FRC-32) (Geobacter daltonii).